The chain runs to 199 residues: Putative 3-methyladenine DNA glycosylase (199 aa).

This sequence belongs to the DNA glycosylase MPG family.

In Rhizobium etli (strain ATCC 51251 / DSM 11541 / JCM 21823 / NBRC 15573 / CFN 42), this protein is Putative 3-methyladenine DNA glycosylase.